We begin with the raw amino-acid sequence, 66 residues long: Cold shock protein CspB (66 aa).

Residues 4-63 (GKVKWFNNEKGYGFIEVEGGSDVFVHFTAIQGEGFKTLEEGQEVSFEIVQGNRGPQAANV) enclose the CSD domain.

As to quaternary structure, homodimer.

It localises to the cytoplasm. Affects cell viability at low temperatures. The sequence is that of Cold shock protein CspB (cspB) from Bacillus caldolyticus.